We begin with the raw amino-acid sequence, 497 residues long: Lysine--tRNA ligase (497 aa).

Residues E406 and E413 each coordinate Mg(2+).

Belongs to the class-II aminoacyl-tRNA synthetase family. In terms of assembly, homodimer. It depends on Mg(2+) as a cofactor.

Its subcellular location is the cytoplasm. It catalyses the reaction tRNA(Lys) + L-lysine + ATP = L-lysyl-tRNA(Lys) + AMP + diphosphate. This Rhizobium leguminosarum bv. trifolii (strain WSM2304) protein is Lysine--tRNA ligase.